A 416-amino-acid polypeptide reads, in one-letter code: Phakinin (416 aa).

The interval 1-48 (MSKRRVAADLPSGTNSSMPVQRHRVSSLRGTHSPSSLDSPPASRTSAV) is disordered. Ser-2 bears the N-acetylserine mark. Residues 2 to 115 (SKRRVAADLP…HTTVEDLGGC (114 aa)) are head. Residues Ser-27, Ser-33, Ser-36, and Ser-91 each carry the phosphoserine modification. Over residues 28–48 (LRGTHSPSSLDSPPASRTSAV) the composition is skewed to polar residues. In terms of domain architecture, IF rod spans 105-416 (DHTTVEDLGG…HALLDREENN (312 aa)). 3 coiled-coil regions span residues 116–146 (LVEYMTKVHALEQVSQELETQLRAHLESKAK), 170–249 (LENA…VKVL), and 308–402 (QTQE…LQKD). A tail region spans residues 397–416 (SQLQKDVASYHALLDREENN).

Belongs to the intermediate filament family. In terms of assembly, part of a complex required for lens intermediate filament formation composed of BFSP1, BFSP2 and CRYAA. Found in a complex composed of PPL (via C-terminal linker domain), BFSP1 and BFSP2 in the retinal lens. Within the complex interacts with PPL (via C-terminal linker domain) and with BFSP1. Identified in a complex that contains VIM, EZR, AHNAK, BFSP1, BFSP2, ANK2, PLEC, PRX and spectrin. Interacts with LGSN. Interacts with VIM. As to expression, detected in retina lens fiber cells (at protein level). Also expressed in the lens epithelium, abundantly expressed in the anterior and anterolateral epithelium, less frequently expressed nearer the lens coronal equator (at protein level).

It localises to the cell membrane. It is found in the cytoplasm. The protein localises to the cytoskeleton. Its subcellular location is the cell cortex. In terms of biological role, required for the correct formation of lens intermediate filaments as part of a complex composed of BFSP1, BFSP2 and CRYAA. Plays a role in maintenance of retinal lens optical clarity. This Mus musculus (Mouse) protein is Phakinin (Bfsp2).